Reading from the N-terminus, the 291-residue chain is m-AAA protease-interacting protein 1, mitochondrial (291 aa).

The N-terminal 96 residues, 1–96 (MALAARLLPQ…SFPACPQRSY (96 aa)), are a transit peptide targeting the mitochondrion.

In terms of assembly, interacts with AFG3L2. Interacts with SPG7. Interacts with SMDT1/EMRE (via the N-terminal transit peptide); interaction is direct and takes place before maturation of SMDT1/EMRE.

Its subcellular location is the mitochondrion matrix. In terms of biological role, promotes sorting of SMDT1/EMRE in mitochondria by ensuring its maturation. Interacts with the transit peptide region of SMDT1/EMRE precursor protein in the mitochondrial matrix, leading to protect it against protein degradation by YME1L1, thereby ensuring SMDT1/EMRE maturation by the mitochondrial processing peptidase (PMPCA and PMPCB). This chain is m-AAA protease-interacting protein 1, mitochondrial, found in Homo sapiens (Human).